Here is a 248-residue protein sequence, read N- to C-terminus: Adenosylcobinamide-GDP ribazoletransferase (248 aa).

The next 6 helical transmembrane spans lie at 36–56 (FFLPVVAFIIGGMEFLIYLAL), 59–79 (FLPPNVIIVLLILFTAMITGG), 114–134 (GTIALIIDLLLKYQLLYSLVL), 137–157 (YSIAIVLAPIIGRISILFLCL), 170–190 (IFIGNMSKPIIFFITTIVLAL), and 199–219 (ATIIPFIGVLLITYLLYLLCL).

The protein belongs to the CobS family. It depends on Mg(2+) as a cofactor.

The protein localises to the cell membrane. It catalyses the reaction alpha-ribazole + adenosylcob(III)inamide-GDP = adenosylcob(III)alamin + GMP + H(+). It carries out the reaction alpha-ribazole 5'-phosphate + adenosylcob(III)inamide-GDP = adenosylcob(III)alamin 5'-phosphate + GMP + H(+). Its pathway is cofactor biosynthesis; adenosylcobalamin biosynthesis; adenosylcobalamin from cob(II)yrinate a,c-diamide: step 7/7. In terms of biological role, joins adenosylcobinamide-GDP and alpha-ribazole to generate adenosylcobalamin (Ado-cobalamin). Also synthesizes adenosylcobalamin 5'-phosphate from adenosylcobinamide-GDP and alpha-ribazole 5'-phosphate. The chain is Adenosylcobinamide-GDP ribazoletransferase from Clostridium botulinum (strain Okra / Type B1).